Reading from the N-terminus, the 171-residue chain is MSRPRVFFDITIAGKPTGRIVMELYNDIVPKTAENFRALCTGEKGVGKSGKPLHFKGSKFHRIIPEFMIQGGDFTRGNGTGGESIYGEKFPDENFKEKHTGPGVLSMANAGPNTNGSQFFLCTVKTAWLDGKHVVFGRVVEGLDIVSKVEGNGSSSGTPKSECLIADCGQL.

The 164-residue stretch at 7-170 (FFDITIAGKP…SECLIADCGQ (164 aa)) folds into the PPIase cyclophilin-type domain.

Belongs to the cyclophilin-type PPIase family.

The enzyme catalyses [protein]-peptidylproline (omega=180) = [protein]-peptidylproline (omega=0). Its function is as follows. PPIases accelerate the folding of proteins. It catalyzes the cis-trans isomerization of proline imidic peptide bonds in oligopeptides. This Caenorhabditis elegans protein is Peptidyl-prolyl cis-trans isomerase 7 (cyn-7).